The following is a 587-amino-acid chain: Glutamine--tRNA ligase (587 aa).

The short motif at 58-68 (PEPNGYLHIGH) is the 'HIGH' region element. Residues 59-61 (EPN) and 65-71 (HIGHAKS) each bind ATP. Residues D91 and Y240 each coordinate L-glutamine. ATP is bound by residues T259 and 294 to 295 (RL). A 'KMSKS' region motif is present at residues 301-305 (VTSKR).

It belongs to the class-I aminoacyl-tRNA synthetase family. Monomer.

Its subcellular location is the cytoplasm. It catalyses the reaction tRNA(Gln) + L-glutamine + ATP = L-glutaminyl-tRNA(Gln) + AMP + diphosphate. This Bordetella parapertussis (strain 12822 / ATCC BAA-587 / NCTC 13253) protein is Glutamine--tRNA ligase.